The sequence spans 137 residues: Protein LTO1 homolog (137 aa).

Ala-2 carries the N-acetylalanine modification. Residues 22–58 (GYQEGYEEGSSLGIVEGKRYGMVHGAKIGSEIGCYRG) are deca-GX3 motif; required for interaction with YAE1 and the CIA complex.

Belongs to the LTO1 family. In terms of assembly, forms a complex with YAE1. Interacts with PYCR1 and PYCR2.

It localises to the nucleus. Its function is as follows. The complex LTO1:YAE1 functions as a target specific adapter that probably recruits apo-ABCE1 to the cytosolic iron-sulfur protein assembly (CIA) complex machinery. May be required for biogenesis of the large ribosomal subunit and initiation of translation. May play a role in the regulation of proline metabolism and ROS production. The polypeptide is Protein LTO1 homolog (Mus musculus (Mouse)).